The chain runs to 207 residues: LexA repressor (207 aa).

Residues 28–48 (VREIAVAVGLASSSTVHGHLE) constitute a DNA-binding region (H-T-H motif). Residues Ser129 and Lys167 each act as for autocatalytic cleavage activity in the active site.

The protein belongs to the peptidase S24 family. As to quaternary structure, homodimer.

The catalysed reaction is Hydrolysis of Ala-|-Gly bond in repressor LexA.. Its function is as follows. Represses a number of genes involved in the response to DNA damage (SOS response), including recA and lexA. In the presence of single-stranded DNA, RecA interacts with LexA causing an autocatalytic cleavage which disrupts the DNA-binding part of LexA, leading to derepression of the SOS regulon and eventually DNA repair. The polypeptide is LexA repressor (Oceanobacillus iheyensis (strain DSM 14371 / CIP 107618 / JCM 11309 / KCTC 3954 / HTE831)).